Reading from the N-terminus, the 497-residue chain is Di-/tripeptide transporter (497 aa).

The Cytoplasmic segment spans residues 1–36 (MQNLNKTEKTFFGQPRGLLTLFQTEFWERFSYYGMR). Residues 37-55 (AILVYYLYALTTADNAGLG) form a helical membrane-spanning segment. Topologically, residues 56–64 (LPKAQAMAI) are extracellular. A helical transmembrane segment spans residues 65 to 83 (VSIYGALVYLSTIVGGWVA). Over 84-92 (DRLLGASRT) the chain is Cytoplasmic. Residues 93 to 111 (IFLGGILITLGHIALATPF) form a helical membrane-spanning segment. The Extracellular segment spans residues 112–115 (GLSS). A helical membrane pass occupies residues 116 to 134 (LFVALFLIILGTGMLKPNI). Residues 135–154 (SNMVGHLYSKDDSRRDTGFN) lie on the Cytoplasmic side of the membrane. The chain crosses the membrane as a helical span at residues 155–173 (IFVVGINMGSLIAPLIVGT). The Extracellular segment spans residues 174-181 (VGQGVNYH). Residues 182 to 200 (LGFSLAAIGMIFALFAYWY) form a helical membrane-spanning segment. Residues 201 to 224 (GRLRHFPEIGREPSNPMDSKARRN) lie on the Cytoplasmic side of the membrane. Residues 225 to 243 (FLITLTIVVIVAIIGFFLL) traverse the membrane as a helical segment. Topologically, residues 244–254 (YQASPANFINN) are extracellular. A helical membrane pass occupies residues 255 to 273 (FINVLSIIGIVVPIIYFVM). The Cytoplasmic portion of the chain corresponds to 274 to 293 (MFTSKKVESDERRKLTAYIP). Residues 294-312 (LFLSAIVFWAIEEQSSTII) traverse the membrane as a helical segment. Over 313–335 (AVWGESRSNLDPTWFGITFHIDP) the chain is Extracellular. The helical transmembrane segment at 336 to 354 (SWYQLLNPLFIVLLSPIFV) threads the bilayer. At 355-372 (RLWNKLGERQPSTIVKFG) the chain is on the cytoplasmic side. The chain crosses the membrane as a helical span at residues 373–391 (LGLMLTGISYLIMTLPGLL). The Extracellular segment spans residues 392–425 (NGTSGRASALWLVLMFAVQMAGELLVSPVGLSVS). Residues 426–444 (TKLAPVAFQSQMMAMWFLA) traverse the membrane as a helical segment. At 445-497 (DSTSQAINAQITPLFKAATEVHFFAITGIIGIIVGIILLIVKKPILKLMGDVR) the chain is on the cytoplasmic side.

It belongs to the major facilitator superfamily. Proton-dependent oligopeptide transporter (POT/PTR) (TC 2.A.17) family.

The protein localises to the cell membrane. Its function is as follows. Proton-dependent uptake of di- or tri-peptides. The sequence is that of Di-/tripeptide transporter (dtpT) from Lactococcus lactis subsp. lactis (strain IL1403) (Streptococcus lactis).